Here is a 383-residue protein sequence, read N- to C-terminus: Putative glutamate--cysteine ligase 2 (383 aa).

This sequence belongs to the glutamate--cysteine ligase type 2 family. YbdK subfamily.

It catalyses the reaction L-cysteine + L-glutamate + ATP = gamma-L-glutamyl-L-cysteine + ADP + phosphate + H(+). Its function is as follows. ATP-dependent carboxylate-amine ligase which exhibits weak glutamate--cysteine ligase activity. The chain is Putative glutamate--cysteine ligase 2 from Legionella pneumophila subsp. pneumophila (strain Philadelphia 1 / ATCC 33152 / DSM 7513).